Reading from the N-terminus, the 414-residue chain is Serine hydroxymethyltransferase (414 aa).

Residues L116 and 120-122 (GHL) each bind (6S)-5,6,7,8-tetrahydrofolate. Position 224 is an N6-(pyridoxal phosphate)lysine (K224). Residues E240 and 348–350 (SPF) each bind (6S)-5,6,7,8-tetrahydrofolate.

It belongs to the SHMT family. Homodimer. Requires pyridoxal 5'-phosphate as cofactor.

It is found in the cytoplasm. It catalyses the reaction (6R)-5,10-methylene-5,6,7,8-tetrahydrofolate + glycine + H2O = (6S)-5,6,7,8-tetrahydrofolate + L-serine. It participates in one-carbon metabolism; tetrahydrofolate interconversion. Its pathway is amino-acid biosynthesis; glycine biosynthesis; glycine from L-serine: step 1/1. Functionally, catalyzes the reversible interconversion of serine and glycine with tetrahydrofolate (THF) serving as the one-carbon carrier. This reaction serves as the major source of one-carbon groups required for the biosynthesis of purines, thymidylate, methionine, and other important biomolecules. Also exhibits THF-independent aldolase activity toward beta-hydroxyamino acids, producing glycine and aldehydes, via a retro-aldol mechanism. The chain is Serine hydroxymethyltransferase from Campylobacter jejuni (strain RM1221).